The sequence spans 164 residues: Phosphopantetheine adenylyltransferase (164 aa).

Ser-9 serves as a coordination point for substrate. Residues 9–10 (SF) and His-17 each bind ATP. 3 residues coordinate substrate: Lys-41, Leu-73, and Lys-87. ATP-binding positions include 88 to 90 (GLR), Glu-98, and 122 to 128 (YSYLSSS).

This sequence belongs to the bacterial CoaD family. Homohexamer. Requires Mg(2+) as cofactor.

The protein localises to the cytoplasm. The catalysed reaction is (R)-4'-phosphopantetheine + ATP + H(+) = 3'-dephospho-CoA + diphosphate. It functions in the pathway cofactor biosynthesis; coenzyme A biosynthesis; CoA from (R)-pantothenate: step 4/5. Functionally, reversibly transfers an adenylyl group from ATP to 4'-phosphopantetheine, yielding dephospho-CoA (dPCoA) and pyrophosphate. In Rhodococcus opacus (strain B4), this protein is Phosphopantetheine adenylyltransferase.